The sequence spans 338 residues: Probable tRNA pseudouridine synthase B (338 aa).

Asp-78 functions as the Nucleophile in the catalytic mechanism. In terms of domain architecture, PUA spans Leu-245–Met-320.

Belongs to the pseudouridine synthase TruB family. Type 2 subfamily.

It catalyses the reaction uridine(55) in tRNA = pseudouridine(55) in tRNA. Could be responsible for synthesis of pseudouridine from uracil-55 in the psi GC loop of transfer RNAs. This is Probable tRNA pseudouridine synthase B from Methanosarcina mazei (strain ATCC BAA-159 / DSM 3647 / Goe1 / Go1 / JCM 11833 / OCM 88) (Methanosarcina frisia).